The following is a 141-amino-acid chain: MASTIHLDVVSAEESIFSGEAEFVAAPAKLGEVGIYPNHAPLITTIKPGVLRVKVANGGEEQAIYISGGLLEVQPGVITVLADTAIRGHDLDEVKAIEAKRAAEEALRNNASGVDYARAQAELSEALAQLQTIEQLRKTTH.

This sequence belongs to the ATPase epsilon chain family. In terms of assembly, F-type ATPases have 2 components, CF(1) - the catalytic core - and CF(0) - the membrane proton channel. CF(1) has five subunits: alpha(3), beta(3), gamma(1), delta(1), epsilon(1). CF(0) has three main subunits: a, b and c.

It is found in the cell inner membrane. Produces ATP from ADP in the presence of a proton gradient across the membrane. The chain is ATP synthase epsilon chain from Methylobacillus flagellatus (strain ATCC 51484 / DSM 6875 / VKM B-1610 / KT).